A 148-amino-acid polypeptide reads, in one-letter code: CDC25-like phosphatase YCH1 (148 aa).

Met-1 is modified (N-acetylmethionine). Positions 29–137 constitute a Rhodanese domain; sequence LREPFQVVDV…WQSVYGDDES (109 aa).

The protein belongs to the MPI phosphatase family.

Its subcellular location is the cytoplasm. The protein localises to the nucleus. In terms of biological role, protein phosphatase. The protein is CDC25-like phosphatase YCH1 (YCH1) of Saccharomyces cerevisiae (strain ATCC 204508 / S288c) (Baker's yeast).